We begin with the raw amino-acid sequence, 328 residues long: Probable transcription factor At4g00610 (328 aa).

The disordered stretch occupies residues 31–143 (AKNKTLVTPS…ERAKTETETG (113 aa)). Over residues 35-54 (TLVTPSTVKKSSDVASTSKK) the composition is skewed to polar residues. Residues 84–108 (SEEEEEDEPSSDSESGSESESDTEA) are compositionally biased toward acidic residues. The segment covering 122–143 (NEKRQSEGKPEEERAKTETETG) has biased composition (basic and acidic residues).

This sequence belongs to the GeBP family.

In Arabidopsis thaliana (Mouse-ear cress), this protein is Probable transcription factor At4g00610.